We begin with the raw amino-acid sequence, 271 residues long: 3-methyl-2-oxobutanoate hydroxymethyltransferase (271 aa).

Residues Asp-51 and Asp-90 each contribute to the Mg(2+) site. 3-methyl-2-oxobutanoate-binding positions include 51 to 52 (DS), Asp-90, and Lys-118. Residue Glu-120 participates in Mg(2+) binding. The Proton acceptor role is filled by Glu-186.

This sequence belongs to the PanB family. Homodecamer; pentamer of dimers. It depends on Mg(2+) as a cofactor.

The protein localises to the cytoplasm. The catalysed reaction is 3-methyl-2-oxobutanoate + (6R)-5,10-methylene-5,6,7,8-tetrahydrofolate + H2O = 2-dehydropantoate + (6S)-5,6,7,8-tetrahydrofolate. The protein operates within cofactor biosynthesis; (R)-pantothenate biosynthesis; (R)-pantoate from 3-methyl-2-oxobutanoate: step 1/2. Functionally, catalyzes the reversible reaction in which hydroxymethyl group from 5,10-methylenetetrahydrofolate is transferred onto alpha-ketoisovalerate to form ketopantoate. The chain is 3-methyl-2-oxobutanoate hydroxymethyltransferase from Xanthomonas campestris pv. campestris (strain 8004).